The chain runs to 131 residues: Colicin-N immunity protein (131 aa).

A run of 2 helical transmembrane segments spans residues 66-84 (ILTP…FLLT) and 104-124 (VFVF…IFVL).

The protein resides in the cell membrane. This chain is Colicin-N immunity protein (cni), found in Escherichia coli.